The primary structure comprises 409 residues: Arginine deiminase (409 aa).

Cys399 (amidino-cysteine intermediate) is an active-site residue.

It belongs to the arginine deiminase family.

It localises to the cytoplasm. It carries out the reaction L-arginine + H2O = L-citrulline + NH4(+). Its pathway is amino-acid degradation; L-arginine degradation via ADI pathway; carbamoyl phosphate from L-arginine: step 1/2. In Streptococcus pneumoniae (strain P1031), this protein is Arginine deiminase.